We begin with the raw amino-acid sequence, 654 residues long: Acetyl-coenzyme A synthetase (654 aa).

CoA contacts are provided by residues 196–199 (RGGK) and threonine 316. ATP-binding positions include 392–394 (GEP), 416–421 (DTWWQT), aspartate 507, and arginine 522. CoA is bound at residue serine 530. An ATP-binding site is contributed by arginine 533. Mg(2+)-binding residues include valine 544 and valine 549. Lysine 619 carries the post-translational modification N6-acetyllysine.

Belongs to the ATP-dependent AMP-binding enzyme family. It depends on Mg(2+) as a cofactor. Acetylated. Deacetylation by the SIR2-homolog deacetylase activates the enzyme.

The catalysed reaction is acetate + ATP + CoA = acetyl-CoA + AMP + diphosphate. In terms of biological role, catalyzes the conversion of acetate into acetyl-CoA (AcCoA), an essential intermediate at the junction of anabolic and catabolic pathways. AcsA undergoes a two-step reaction. In the first half reaction, AcsA combines acetate with ATP to form acetyl-adenylate (AcAMP) intermediate. In the second half reaction, it can then transfer the acetyl group from AcAMP to the sulfhydryl group of CoA, forming the product AcCoA. This is Acetyl-coenzyme A synthetase from Chromobacterium violaceum (strain ATCC 12472 / DSM 30191 / JCM 1249 / CCUG 213 / NBRC 12614 / NCIMB 9131 / NCTC 9757 / MK).